The chain runs to 244 residues: DNA repair protein RecO (244 aa).

It belongs to the RecO family.

Functionally, involved in DNA repair and RecF pathway recombination. This is DNA repair protein RecO from Nocardioides sp. (strain ATCC BAA-499 / JS614).